The primary structure comprises 485 residues: Mitochondrial metalloendopeptidase OMA1 (485 aa).

The transit peptide at 1 to 16 (MKPSLKRRLLLLSRKF) directs the protein to the mitochondrion. Topologically, residues 17–147 (AKASIRKLLR…GPGRWFQNPR (131 aa)) are mitochondrial matrix. Residues 148–168 (TVFTVVLVGSVGLITLIVGNT) form a helical membrane-spanning segment. Residues 169–485 (ETIPYTKRTH…AGRTGVEGFL (317 aa)) lie on the Mitochondrial intermembrane side of the membrane. Residue histidine 352 participates in Zn(2+) binding. Glutamate 353 is an active-site residue. Residues histidine 356 and glutamate 405 each coordinate Zn(2+). The required for protease activation stretch occupies residues 456–485 (KLLAQANVMEEALMIYREVQAGRTGVEGFL).

This sequence belongs to the peptidase M48A family. As to quaternary structure, homooligomer. Requires Zn(2+) as cofactor.

It is found in the mitochondrion inner membrane. Protease that is part of the quality control system in the inner membrane of mitochondria. Metalloendopeptidase that modulates the oxidative phosphorylation (OXPHOS) system and plant growth. Involved in tolerance mechanisms to heat, osmotic and oxidative stresses. The sequence is that of Mitochondrial metalloendopeptidase OMA1 from Arabidopsis thaliana (Mouse-ear cress).